We begin with the raw amino-acid sequence, 219 residues long: Urease accessory protein UreG (219 aa).

Positions 1–20 (MSALHSIPHRSKKLPPLRVG) are disordered. GTP is bound at residue 23–30 (GPVGSGKT).

The protein belongs to the SIMIBI class G3E GTPase family. UreG subfamily. In terms of assembly, homodimer. UreD, UreF and UreG form a complex that acts as a GTP-hydrolysis-dependent molecular chaperone, activating the urease apoprotein by helping to assemble the nickel containing metallocenter of UreC. The UreE protein probably delivers the nickel.

The protein localises to the cytoplasm. Functionally, facilitates the functional incorporation of the urease nickel metallocenter. This process requires GTP hydrolysis, probably effectuated by UreG. The chain is Urease accessory protein UreG from Methylibium petroleiphilum (strain ATCC BAA-1232 / LMG 22953 / PM1).